The sequence spans 335 residues: Heat-inducible transcription repressor HrcA (335 aa).

This sequence belongs to the HrcA family.

Functionally, negative regulator of class I heat shock genes (grpE-dnaK-dnaJ and groELS operons). Prevents heat-shock induction of these operons. This chain is Heat-inducible transcription repressor HrcA, found in Mesomycoplasma hyopneumoniae (strain 232) (Mycoplasma hyopneumoniae).